Consider the following 288-residue polypeptide: MAVGKEIRTQISSIKNTQKITSAMEMVAASKMKKAQDRMLESRPYCEKISNIIGHLAYAHSEFQHPYMNSLKKLQSIGIIIISSDRGLCGGLNTNLFRYILRQVVEYQANGIKVDICTIGKKATLFFKNFGLNVKSVLTDLGDSPHFDDLLGTIKIMLDGFDLGEIQQLSVAYNKFENTMIQIPTIMQLVPIVSIKSDNINHYWDYIYEPNAQEVLSALLVRYIEALVYQGLVENISCEQSSRMIAMKSATDNAGDMVKELELIYNKARQAAITQEISEIVSGGATAV.

It belongs to the ATPase gamma chain family. In terms of assembly, F-type ATPases have 2 components, CF(1) - the catalytic core - and CF(0) - the membrane proton channel. CF(1) has five subunits: alpha(3), beta(3), gamma(1), delta(1), epsilon(1). CF(0) has three main subunits: a, b and c.

The protein localises to the cell inner membrane. Functionally, produces ATP from ADP in the presence of a proton gradient across the membrane. The gamma chain is believed to be important in regulating ATPase activity and the flow of protons through the CF(0) complex. This is ATP synthase gamma chain from Vesicomyosocius okutanii subsp. Calyptogena okutanii (strain HA).